A 248-amino-acid polypeptide reads, in one-letter code: Aquaporin Z (248 aa).

2 helical membrane passes run 11 to 31 (FIGT…AAAF) and 36 to 56 (IGFA…AFAI). The NPA 1 signature appears at 65–67 (NPA). Transmembrane regions (helical) follow at residues 87–107 (IAAQ…IAGG), 132–152 (LLAC…IILG), and 161–181 (GFAP…SIPV). Residues 187–189 (NPA) carry the NPA 2 motif. The helical transmembrane segment at 203-223 (IAELWLFWLAPIVGAALAGLF) threads the bilayer.

This sequence belongs to the MIP/aquaporin (TC 1.A.8) family. As to quaternary structure, homotetramer.

It localises to the cell inner membrane. It catalyses the reaction H2O(in) = H2O(out). Functionally, channel that permits osmotically driven movement of water in both directions. It is involved in the osmoregulation and in the maintenance of cell turgor during volume expansion in rapidly growing cells. It mediates rapid entry or exit of water in response to abrupt changes in osmolarity. The protein is Aquaporin Z of Gloeobacter violaceus (strain ATCC 29082 / PCC 7421).